A 483-amino-acid chain; its full sequence is FAD-linked oxidoreductase pgmH (483 aa).

Positions 54 to 215 (SIRLATLVVY…TEFKYRVHKQ (162 aa)) constitute an FAD-binding PCMH-type domain.

Belongs to the oxygen-dependent FAD-linked oxidoreductase family. FAD is required as a cofactor.

Its pathway is pigment biosynthesis. It participates in secondary metabolite biosynthesis. In terms of biological role, FAD-linked oxidoreductase; part of the gene cluster that mediates the biosynthesis of pleosporalin A, ascomycone A, as well as a third cryptic naphthoquinone derived pigment, all responsible for the coloration of conidia. Essential for the production of pleosporalin A, but not the 2 other final products. The pathway begins with the biosynthesis of the cyclized heptaketide 3-acetonyl-1,6,8-trihydroxy-2-naphthaldehyde by the NR-PKS pgmA. The C-6 hydroxyl group is further methylated by the O-methyltransferase pgmB to yield fusarubinaldehyde which is in turn oxidized by the cytochrome P450 monooxygenase pgmC at C-9. The C-1 hydroxyl group is then methylated spontaneously. Although pgmE, pgmD and pgmH are essential for the production of pleosporalin A, it is not the case for the 2 other final products and it remains difficult to assign a specific function to each enzyme. PgmF and pgmG seem not to be involved in pigment biosynthesis although they were regulated by the cluster-specific transcription factor pgmR. The protein is FAD-linked oxidoreductase pgmH of Aspergillus terreus (strain NIH 2624 / FGSC A1156).